Consider the following 270-residue polypeptide: Formamidopyrimidine-DNA glycosylase (270 aa).

Catalysis depends on P2, which acts as the Schiff-base intermediate with DNA. E3 acts as the Proton donor in catalysis. K57 functions as the Proton donor; for beta-elimination activity in the catalytic mechanism. The DNA site is built by H90, R109, and K150. The FPG-type zinc-finger motif lies at 235–269 (LVYGNKDKPCPRCGTKIKSIIIGQRNSFFCPQCQK). R259 acts as the Proton donor; for delta-elimination activity in catalysis.

The protein belongs to the FPG family. In terms of assembly, monomer. Requires Zn(2+) as cofactor.

It carries out the reaction Hydrolysis of DNA containing ring-opened 7-methylguanine residues, releasing 2,6-diamino-4-hydroxy-5-(N-methyl)formamidopyrimidine.. The enzyme catalyses 2'-deoxyribonucleotide-(2'-deoxyribose 5'-phosphate)-2'-deoxyribonucleotide-DNA = a 3'-end 2'-deoxyribonucleotide-(2,3-dehydro-2,3-deoxyribose 5'-phosphate)-DNA + a 5'-end 5'-phospho-2'-deoxyribonucleoside-DNA + H(+). Involved in base excision repair of DNA damaged by oxidation or by mutagenic agents. Acts as a DNA glycosylase that recognizes and removes damaged bases. Has a preference for oxidized purines, such as 7,8-dihydro-8-oxoguanine (8-oxoG). Has AP (apurinic/apyrimidinic) lyase activity and introduces nicks in the DNA strand. Cleaves the DNA backbone by beta-delta elimination to generate a single-strand break at the site of the removed base with both 3'- and 5'-phosphates. The sequence is that of Formamidopyrimidine-DNA glycosylase from Histophilus somni (strain 2336) (Haemophilus somnus).